We begin with the raw amino-acid sequence, 293 residues long: Homoserine kinase (293 aa).

84 to 94 (PFSRGLGSSSS) provides a ligand contact to ATP.

It belongs to the GHMP kinase family. Homoserine kinase subfamily.

It is found in the cytoplasm. The catalysed reaction is L-homoserine + ATP = O-phospho-L-homoserine + ADP + H(+). It functions in the pathway amino-acid biosynthesis; L-threonine biosynthesis; L-threonine from L-aspartate: step 4/5. Its function is as follows. Catalyzes the ATP-dependent phosphorylation of L-homoserine to L-homoserine phosphate. This is Homoserine kinase from Campylobacter fetus subsp. fetus (strain 82-40).